A 284-amino-acid chain; its full sequence is Bifunctional protein FolD (284 aa).

NADP(+)-binding positions include 166–168 (GAS) and I232.

Belongs to the tetrahydrofolate dehydrogenase/cyclohydrolase family. As to quaternary structure, homodimer.

The enzyme catalyses (6R)-5,10-methylene-5,6,7,8-tetrahydrofolate + NADP(+) = (6R)-5,10-methenyltetrahydrofolate + NADPH. The catalysed reaction is (6R)-5,10-methenyltetrahydrofolate + H2O = (6R)-10-formyltetrahydrofolate + H(+). It functions in the pathway one-carbon metabolism; tetrahydrofolate interconversion. Catalyzes the oxidation of 5,10-methylenetetrahydrofolate to 5,10-methenyltetrahydrofolate and then the hydrolysis of 5,10-methenyltetrahydrofolate to 10-formyltetrahydrofolate. In Shewanella halifaxensis (strain HAW-EB4), this protein is Bifunctional protein FolD.